Consider the following 145-residue polypeptide: Arginine repressor (145 aa).

The protein belongs to the ArgR family.

It localises to the cytoplasm. Its pathway is amino-acid biosynthesis; L-arginine biosynthesis [regulation]. Functionally, regulates arginine biosynthesis genes. This Streptococcus pyogenes serotype M3 (strain ATCC BAA-595 / MGAS315) protein is Arginine repressor.